The primary structure comprises 565 residues: MKSPAPSRPQKMALIPACIFLCFAALSVQAEETSVTPQPPDILLGPLFNDVQNAKLFPDQKTFADAVPNSDPLMILADYRMQQNQSGFDLRHFVNVNFTLPKEGEKYVPPEGQSLREHIDGLWPVLTRSTENTEKWDSLLPLPEPYVVPGGRFREVYYWDSYFTMLGLAESGHWDKVADMVANFAHEIDTYGHIPNGNRSYYLSRSQPPFFALMVELLAQHEGDAALKQYLPQMQKEYAYWMDGVENLQAGQQEKRVVKLQDGTLLNRYWDDRDTPRPESWVEDIATAKSNPNRPATEIYRDLRSAAASGWDFSSRWMDNPQQLNTLRTTSIVPVDLNSLMFKMEKILARASKAAGDNAMANQYETLANARQKGIEKYLWNDQQGWYADYDLKSHKVRNQLTAAALFPLYVNAAAKDRASKMATATKTHLLQPGGLNTTSVKSGQQWDAPNGWAPLQWVATEGLQNYGQNEVAMDISWHFLTNVQHTYDREKKLVEKYDVSTTGTGGGGGEYPLQDGFGWTNGVTLKMLDLICPKEQPCDNVPATRPLSESTTQPVKQKEAEPTP.

Positions 1–30 (MKSPAPSRPQKMALIPACIFLCFAALSVQA) are cleaved as a signal peptide. Substrate-binding positions include Arg-152, 159 to 160 (WD), Asn-196, 205 to 207 (RSQ), 277 to 279 (RPE), and Gly-310. Residues Asp-312 and Glu-496 each act as proton donor/acceptor in the active site. Glu-511 lines the substrate pocket. The disordered stretch occupies residues 539 to 565 (CDNVPATRPLSESTTQPVKQKEAEPTP).

It belongs to the glycosyl hydrolase 37 family. In terms of assembly, monomer.

Its subcellular location is the periplasm. The enzyme catalyses alpha,alpha-trehalose + H2O = alpha-D-glucose + beta-D-glucose. In terms of biological role, provides the cells with the ability to utilize trehalose at high osmolarity by splitting it into glucose molecules that can subsequently be taken up by the phosphotransferase-mediated uptake system. This chain is Periplasmic trehalase, found in Escherichia coli O17:K52:H18 (strain UMN026 / ExPEC).